The primary structure comprises 456 residues: Bifunctional protein GlmU (456 aa).

Residues Met1 to Pro228 are pyrophosphorylase. UDP-N-acetyl-alpha-D-glucosamine-binding positions include Leu10–Gly13, Lys24, Gln76, Gly81–Thr82, Tyr103–Asp105, Gly138, Glu153, Asn168, and Asn226. Asp105 provides a ligand contact to Mg(2+). Asn226 is a binding site for Mg(2+). A linker region spans residues Trp229–Gln249. The interval Gly250–Pro456 is N-acetyltransferase. Residues Arg332 and Lys350 each contribute to the UDP-N-acetyl-alpha-D-glucosamine site. The active-site Proton acceptor is His362. The UDP-N-acetyl-alpha-D-glucosamine site is built by Tyr365 and Asn376. Acetyl-CoA-binding positions include Ala379, Asn385 to Tyr386, Ser404, Ala422, and Arg439.

In the N-terminal section; belongs to the N-acetylglucosamine-1-phosphate uridyltransferase family. It in the C-terminal section; belongs to the transferase hexapeptide repeat family. As to quaternary structure, homotrimer. Requires Mg(2+) as cofactor.

The protein resides in the cytoplasm. The catalysed reaction is alpha-D-glucosamine 1-phosphate + acetyl-CoA = N-acetyl-alpha-D-glucosamine 1-phosphate + CoA + H(+). The enzyme catalyses N-acetyl-alpha-D-glucosamine 1-phosphate + UTP + H(+) = UDP-N-acetyl-alpha-D-glucosamine + diphosphate. It participates in nucleotide-sugar biosynthesis; UDP-N-acetyl-alpha-D-glucosamine biosynthesis; N-acetyl-alpha-D-glucosamine 1-phosphate from alpha-D-glucosamine 6-phosphate (route II): step 2/2. Its pathway is nucleotide-sugar biosynthesis; UDP-N-acetyl-alpha-D-glucosamine biosynthesis; UDP-N-acetyl-alpha-D-glucosamine from N-acetyl-alpha-D-glucosamine 1-phosphate: step 1/1. The protein operates within bacterial outer membrane biogenesis; LPS lipid A biosynthesis. Functionally, catalyzes the last two sequential reactions in the de novo biosynthetic pathway for UDP-N-acetylglucosamine (UDP-GlcNAc). The C-terminal domain catalyzes the transfer of acetyl group from acetyl coenzyme A to glucosamine-1-phosphate (GlcN-1-P) to produce N-acetylglucosamine-1-phosphate (GlcNAc-1-P), which is converted into UDP-GlcNAc by the transfer of uridine 5-monophosphate (from uridine 5-triphosphate), a reaction catalyzed by the N-terminal domain. This chain is Bifunctional protein GlmU, found in Xanthomonas axonopodis pv. citri (strain 306).